The sequence spans 387 residues: Lipid-A-disaccharide synthase (387 aa).

It belongs to the LpxB family.

It carries out the reaction 2-N,3-O-bis[(3R)-3-hydroxytetradecanoyl]-alpha-D-glucosaminyl 1-phosphate + UDP-2-N,3-O-bis[(3R)-3-hydroxytetradecanoyl]-alpha-D-glucosamine = lipid A disaccharide (E. coli) + UDP + H(+). The catalysed reaction is a lipid X + a UDP-2-N,3-O-bis[(3R)-3-hydroxyacyl]-alpha-D-glucosamine = a lipid A disaccharide + UDP + H(+). Its pathway is glycolipid biosynthesis; lipid IV(A) biosynthesis; lipid IV(A) from (3R)-3-hydroxytetradecanoyl-[acyl-carrier-protein] and UDP-N-acetyl-alpha-D-glucosamine: step 5/6. Condensation of UDP-2,3-diacylglucosamine and 2,3-diacylglucosamine-1-phosphate to form lipid A disaccharide, a precursor of lipid A, a phosphorylated glycolipid that anchors the lipopolysaccharide to the outer membrane of the cell. The polypeptide is Lipid-A-disaccharide synthase (Blochmanniella pennsylvanica (strain BPEN)).